A 428-amino-acid polypeptide reads, in one-letter code: MQILVYDNLDEKQKEEALKRPAISAKDEISKIVSSIIKEVQEKGDEALIEQALKFDKAEISKIKITQEEITQASKRLDKDLQEAILVAYENIKKFHEAQIPHEIALETTKGVKCEVLTRPIEKVGLYIPGGLAPLFSTVLMLAIPAKIAGCEKIVLASPAKINDAVLFCAKLCGVDEIYQMGGAGAIAALAYGTQSVLKVDKIFGPGNAFVTEAKRQVSSDINGAAIDMQAGPSEVLVIADDLANEKFVASDLLSQAEHGADSQVILVCLSQDFAKKASDEVQSQLELLPRKELASKSIANSRIIIAKDLNQALEISNLYAPEHLIIQTQNPRELLKGVKHAGSVFLGAYSPESMGDYASGTNHVLPTYGLTKTHSSLGLADFSKRMTVQELSKEGFLALGKSVEILAQNEHLDAHKNAVTFRLESLK.

Residues S234, Q256, and H259 each contribute to the substrate site. Zn(2+) is bound by residues Q256 and H259. Residues E323 and H324 each act as proton acceptor in the active site. Residues H324, D357, E411, and H416 each contribute to the substrate site. A Zn(2+)-binding site is contributed by D357. H416 serves as a coordination point for Zn(2+).

The protein belongs to the histidinol dehydrogenase family. Zn(2+) serves as cofactor.

It catalyses the reaction L-histidinol + 2 NAD(+) + H2O = L-histidine + 2 NADH + 3 H(+). The protein operates within amino-acid biosynthesis; L-histidine biosynthesis; L-histidine from 5-phospho-alpha-D-ribose 1-diphosphate: step 9/9. Functionally, catalyzes the sequential NAD-dependent oxidations of L-histidinol to L-histidinaldehyde and then to L-histidine. The sequence is that of Histidinol dehydrogenase from Campylobacter jejuni (strain RM1221).